Consider the following 252-residue polypeptide: Phosphate import ATP-binding protein PstB (252 aa).

The region spanning 6–247 is the ABC transporter domain; the sequence is MSIRDLNFYY…PAQKATEDYI (242 aa). Position 38-45 (38-45) interacts with ATP; the sequence is GPSGCGKS.

Belongs to the ABC transporter superfamily. Phosphate importer (TC 3.A.1.7) family. As to quaternary structure, the complex is composed of two ATP-binding proteins (PstB), two transmembrane proteins (PstC and PstA) and a solute-binding protein (PstS).

The protein localises to the cell inner membrane. The catalysed reaction is phosphate(out) + ATP + H2O = ADP + 2 phosphate(in) + H(+). Part of the ABC transporter complex PstSACB involved in phosphate import. Responsible for energy coupling to the transport system. This Psychrobacter cryohalolentis (strain ATCC BAA-1226 / DSM 17306 / VKM B-2378 / K5) protein is Phosphate import ATP-binding protein PstB.